A 149-amino-acid chain; its full sequence is Transcriptional repressor NrdR (149 aa).

Residues 3–34 (CPFCSEQETKVIDSRLVAEGQQVRRRRECMVC) fold into a zinc finger. One can recognise an ATP-cone domain in the interval 49-139 (PRVIKRDGSR…VYRSFEDIRE (91 aa)).

It belongs to the NrdR family. Zn(2+) is required as a cofactor.

Functionally, negatively regulates transcription of bacterial ribonucleotide reductase nrd genes and operons by binding to NrdR-boxes. The chain is Transcriptional repressor NrdR from Alteromonas mediterranea (strain DSM 17117 / CIP 110805 / LMG 28347 / Deep ecotype).